We begin with the raw amino-acid sequence, 394 residues long: Proliferation-associated protein 2G4 (394 aa).

Position 2 is an N-acetylserine (Ser2). Position 2 is a phosphoserine (Ser2). The tract at residues 2–48 (SGEDEQQEQTIAEDLVVTKYKMGGDIANRVLRSLVEASSSGVSVLSL) is necessary for nucleolar localization. The RNA-binding stretch occupies residues 46–54 (LSLCEKGDA). Lys298 participates in a covalent cross-link: Glycyl lysine isopeptide (Lys-Gly) (interchain with G-Cter in SUMO2). The necessary for nucleolar localization stretch occupies residues 301–394 (LLQPFNVLYE…ETLEENGAGD (94 aa)). At Ser335 the chain carries Phosphoserine. The interval 358–394 (LQSSASRKTQKKKKKKASKTVENATSGETLEENGAGD) is disordered. A Phosphoserine; by PKC/PRKCD modification is found at Ser361. Positions 361–375 (SASRKTQKKKKKKAS) are interaction with RNA. Residues 365–375 (KTQKKKKKKAS) are compositionally biased toward basic residues. Phosphothreonine is present on residues Thr366 and Thr386.

Belongs to the peptidase M24 family. Isoform 2 interacts with the cytoplasmic domain of non-phosphorylated ERBB3; the interaction requires PKC activity. Interacts with AR. Treatment with HRG leads to dissociation from ERBB3 and increases association with AR. Interacts with nucleolin/NCL. Component of a ribonucleoprotein complex containing at least PA2G4, NCL, TOP1, PABPC2, RPLP0, acetylated histone H1 (HIST1H1A or H1F1), histone H1 2/4, RPL4, RPL8, RPL15, RPL18, RPL18A, RPL21, RPL11, RPL12, RPL28, RPL27, RPLP2 and RPL24. Interacts with HDAC2. Interacts with RB1; the interaction is enhanced upon PA2G4 dephosphorylation. Interacts with AKT1. Isoform 1 and isoform 2 interact with RNF20. Isoform 2 interacts with HUWE1. Interacts with DNAJC21. Post-translationally, phosphorylated on serine and threonine residues. Phosphorylation is enhanced by HRG treatment. Basal phosphorylation is PKC-dependent and HRG-induced phosphorylation is predominantly PKC-independent. Phosphorylation at Ser-361 by PKC/PRKCD regulates its nucleolar localization. In terms of processing, isoform 2 is polyubiquitinated, leading to proteasomal degradation and phosphorylation by PKC/PRKCD enhances polyubiquitination. As to expression, widely expressed.

The protein localises to the cytoplasm. The protein resides in the nucleus. It localises to the nucleolus. Functionally, may play a role in a ERBB3-regulated signal transduction pathway. Seems be involved in growth regulation. Acts a corepressor of the androgen receptor (AR) and is regulated by the ERBB3 ligand neuregulin-1/heregulin (HRG). Inhibits transcription of some E2F1-regulated promoters, probably by recruiting histone acetylase (HAT) activity. Binds RNA. Associates with 28S, 18S and 5.8S mature rRNAs, several rRNA precursors and probably U3 small nucleolar RNA. May be involved in regulation of intermediate and late steps of rRNA processing. May be involved in ribosome assembly. Mediates cap-independent translation of specific viral IRESs (internal ribosomal entry site). Together with PTBP1 is required for the translation initiation on the foot-and-mouth disease virus (FMDV) IRES. Regulates cell proliferation, differentiation, and survival. Isoform 1 suppresses apoptosis whereas isoform 2 promotes cell differentiation. The protein is Proliferation-associated protein 2G4 (Pa2g4) of Mus musculus (Mouse).